Here is a 91-residue protein sequence, read N- to C-terminus: Bombyxin B-1 homolog (91 aa).

The signal sequence occupies residues 1 to 19 (MKVSMFVVIVLCMVAASSA). 3 disulfides stabilise this stretch: C27–C78, C39–C91, and C77–C82. The propeptide at 49–69 (SGAQYARYGWQSPESREGARG) is c peptide like.

This sequence belongs to the insulin family. As to quaternary structure, heterodimer of a B chain and an A chain linked by two disulfide bonds.

Its subcellular location is the secreted. In terms of biological role, brain peptide responsible for activation of prothoracic glands to produce ecdysone in insects. This Samia cynthia (Ailanthus silkmoth) protein is Bombyxin B-1 homolog (SBXB1).